The sequence spans 310 residues: Putative S-adenosyl-L-methionine-dependent methyltransferase MUL_4763 (310 aa).

S-adenosyl-L-methionine contacts are provided by residues Asp137 and 166–167 (DL).

It belongs to the UPF0677 family.

Its function is as follows. Exhibits S-adenosyl-L-methionine-dependent methyltransferase activity. In Mycobacterium ulcerans (strain Agy99), this protein is Putative S-adenosyl-L-methionine-dependent methyltransferase MUL_4763.